The chain runs to 432 residues: Glutamyl-tRNA reductase (432 aa).

Substrate contacts are provided by residues 49 to 52 (TCNR), Ser101, 106 to 108 (ESQ), and Gln112. Cys50 serves as the catalytic Nucleophile. 181 to 186 (GTGETI) contributes to the NADP(+) binding site. Residues 410 to 432 (KPGYHHPTLQTTIVKTDETDPAS) are disordered.

The protein belongs to the glutamyl-tRNA reductase family. Homodimer.

The enzyme catalyses (S)-4-amino-5-oxopentanoate + tRNA(Glu) + NADP(+) = L-glutamyl-tRNA(Glu) + NADPH + H(+). The protein operates within porphyrin-containing compound metabolism; protoporphyrin-IX biosynthesis; 5-aminolevulinate from L-glutamyl-tRNA(Glu): step 1/2. Catalyzes the NADPH-dependent reduction of glutamyl-tRNA(Glu) to glutamate 1-semialdehyde (GSA). The chain is Glutamyl-tRNA reductase from Xylella fastidiosa (strain 9a5c).